A 564-amino-acid polypeptide reads, in one-letter code: Arrestin domain-containing protein E (564 aa).

The segment covering 74–146 has biased composition (low complexity); sequence SQQPQSSQPS…NTSNGFSPPN (73 aa). Disordered stretches follow at residues 74-150 and 245-286; these read SQQP…LNKN and ASQP…SFPS. Pro residues predominate over residues 250–259; the sequence is PQQPQQPQPQ. Low complexity predominate over residues 260 to 269; it reads QPQQQQFQQQ. A compositionally biased stretch (polar residues) spans 270–285; that stretch reads SYNNNNSTQSMLSSFP. One can recognise an LIM zinc-binding domain in the interval 348-413; that stretch reads DKCAACDALL…PMCFESTTGL (66 aa).

This chain is Arrestin domain-containing protein E (adcE), found in Dictyostelium discoideum (Social amoeba).